Reading from the N-terminus, the 625-residue chain is Interleukin-1 receptor-associated kinase-like 2 (625 aa).

In terms of domain architecture, Death spans 13 to 94 (LDDPCRNMDA…RAAQIILNWK (82 aa)). Positions 111 to 181 (KPEKPLAASV…SSDSKDFSTS (71 aa)) are disordered. At serine 144 the chain carries Phosphoserine. Positions 169-181 (LPTSSDSKDFSTS) are enriched in polar residues. Residues 210 to 503 (FNQNHKISQG…GSVAAVEEWL (294 aa)) enclose the Protein kinase domain. ATP is bound by residues 216 to 224 (ISQGTFADV), lysine 237, and 337 to 340 (KSSN). The interval 513 to 539 (SGLSEGTGSSSNTPEETDDVDNSSLDA) is disordered. The span at 516-526 (SEGTGSSSNTP) shows a compositional bias: polar residues.

Belongs to the protein kinase superfamily. TKL Ser/Thr protein kinase family. Pelle subfamily. In terms of assembly, interacts with MYD88. IL-1 stimulation leads to the formation of a signaling complex which dissociates from the IL-1 receptor following the binding of PELI1.

Binds to the IL-1 type I receptor following IL-1 engagement, triggering intracellular signaling cascades leading to transcriptional up-regulation and mRNA stabilization. This is Interleukin-1 receptor-associated kinase-like 2 (IRAK2) from Pongo abelii (Sumatran orangutan).